We begin with the raw amino-acid sequence, 385 residues long: Probable dual-specificity RNA methyltransferase RlmN (385 aa).

The interval Met1–Leu35 is disordered. Catalysis depends on Glu121, which acts as the Proton acceptor. The region spanning Thr132–Asp367 is the Radical SAM core domain. The cysteines at positions 139 and 372 are disulfide-linked. Residues Cys146, Cys150, and Cys153 each contribute to the [4Fe-4S] cluster site. S-adenosyl-L-methionine-binding positions include Gly198–Glu199, Ser230, Ser253–His255, and Asn329. Cys372 functions as the S-methylcysteine intermediate in the catalytic mechanism.

It belongs to the radical SAM superfamily. RlmN family. [4Fe-4S] cluster is required as a cofactor.

The protein resides in the cytoplasm. It carries out the reaction adenosine(2503) in 23S rRNA + 2 reduced [2Fe-2S]-[ferredoxin] + 2 S-adenosyl-L-methionine = 2-methyladenosine(2503) in 23S rRNA + 5'-deoxyadenosine + L-methionine + 2 oxidized [2Fe-2S]-[ferredoxin] + S-adenosyl-L-homocysteine. The catalysed reaction is adenosine(37) in tRNA + 2 reduced [2Fe-2S]-[ferredoxin] + 2 S-adenosyl-L-methionine = 2-methyladenosine(37) in tRNA + 5'-deoxyadenosine + L-methionine + 2 oxidized [2Fe-2S]-[ferredoxin] + S-adenosyl-L-homocysteine. Specifically methylates position 2 of adenine 2503 in 23S rRNA and position 2 of adenine 37 in tRNAs. The sequence is that of Probable dual-specificity RNA methyltransferase RlmN from Heliobacterium modesticaldum (strain ATCC 51547 / Ice1).